A 400-amino-acid polypeptide reads, in one-letter code: NADH-ubiquinone oxidoreductase 49 kDa subunit (400 aa).

Belongs to the complex I 49 kDa subunit family.

Its subcellular location is the mitochondrion. It catalyses the reaction a ubiquinone + NADH + 5 H(+)(in) = a ubiquinol + NAD(+) + 4 H(+)(out). Core subunit of the mitochondrial membrane respiratory chain NADH dehydrogenase (Complex I) that is believed to belong to the minimal assembly required for catalysis. Complex I functions in the transfer of electrons from NADH to the respiratory chain. The immediate electron acceptor for the enzyme is believed to be ubiquinone. Component of the iron-sulfur (IP) fragment of the enzyme. Component of the iron-sulfur (IP) fragment of the enzyme. The sequence is that of NADH-ubiquinone oxidoreductase 49 kDa subunit (NAD7) from Prototheca wickerhamii.